Consider the following 1157-residue polypeptide: DNA-directed RNA polymerase subunit beta (1157 aa).

It belongs to the RNA polymerase beta chain family. In terms of assembly, the RNAP catalytic core consists of 2 alpha, 1 beta, 1 beta' and 1 omega subunit. When a sigma factor is associated with the core the holoenzyme is formed, which can initiate transcription.

The catalysed reaction is RNA(n) + a ribonucleoside 5'-triphosphate = RNA(n+1) + diphosphate. Its function is as follows. DNA-dependent RNA polymerase catalyzes the transcription of DNA into RNA using the four ribonucleoside triphosphates as substrates. This Tropheryma whipplei (Whipple's bacillus) protein is DNA-directed RNA polymerase subunit beta.